The chain runs to 388 residues: ATP phosphoribosyltransferase regulatory subunit (388 aa).

The protein belongs to the class-II aminoacyl-tRNA synthetase family. HisZ subfamily. In terms of assembly, heteromultimer composed of HisG and HisZ subunits.

It is found in the cytoplasm. It functions in the pathway amino-acid biosynthesis; L-histidine biosynthesis; L-histidine from 5-phospho-alpha-D-ribose 1-diphosphate: step 1/9. Required for the first step of histidine biosynthesis. May allow the feedback regulation of ATP phosphoribosyltransferase activity by histidine. In Acinetobacter baumannii (strain AB307-0294), this protein is ATP phosphoribosyltransferase regulatory subunit.